A 166-amino-acid polypeptide reads, in one-letter code: NADH-quinone oxidoreductase subunit B (166 aa).

[4Fe-4S] cluster is bound by residues cysteine 44, cysteine 45, cysteine 110, and cysteine 140.

This sequence belongs to the complex I 20 kDa subunit family. NDH-1 is composed of 14 different subunits. Subunits NuoB, C, D, E, F, and G constitute the peripheral sector of the complex. The cofactor is [4Fe-4S] cluster.

It is found in the cell membrane. It carries out the reaction a quinone + NADH + 5 H(+)(in) = a quinol + NAD(+) + 4 H(+)(out). Functionally, NDH-1 shuttles electrons from NADH, via FMN and iron-sulfur (Fe-S) centers, to quinones in the respiratory chain. The immediate electron acceptor for the enzyme in this species is believed to be a menaquinone. Couples the redox reaction to proton translocation (for every two electrons transferred, four hydrogen ions are translocated across the cytoplasmic membrane), and thus conserves the redox energy in a proton gradient. This chain is NADH-quinone oxidoreductase subunit B, found in Carboxydothermus hydrogenoformans (strain ATCC BAA-161 / DSM 6008 / Z-2901).